Here is a 375-residue protein sequence, read N- to C-terminus: Alcohol dehydrogenase 1A (375 aa).

Position 2 is an N-acetylserine (S2). S23 carries the post-translational modification Phosphoserine. Position 47 (C47) interacts with Zn(2+). 48–52 (GTDDH) is a binding site for NAD(+). Residues H68, C98, C101, C104, C112, and C175 each coordinate Zn(2+). NAD(+)-binding positions include 200-205 (GLGGVG), D224, K229, I270, 293-295 (VGV), 318-320 (AIL), and R370.

The protein belongs to the zinc-containing alcohol dehydrogenase family. As to quaternary structure, dimer of identical or heterodimer of closely related subunits alpha, beta, or gamma that are encoded by genes ADH1A, ADH1B, and ADH1C, respectively. Requires Zn(2+) as cofactor.

The protein localises to the cytoplasm. It carries out the reaction a primary alcohol + NAD(+) = an aldehyde + NADH + H(+). The catalysed reaction is a secondary alcohol + NAD(+) = a ketone + NADH + H(+). The enzyme catalyses butan-1-ol + NAD(+) = butanal + NADH + H(+). It catalyses the reaction 1-propanol + NAD(+) = propanal + NADH + H(+). In terms of biological role, alcohol dehydrogenase. Oxidizes primary as well as secondary alcohols. Ethanol is a very poor substrate. The protein is Alcohol dehydrogenase 1A (ADH1A) of Homo sapiens (Human).